The sequence spans 219 residues: 7-cyano-7-deazaguanine synthase (219 aa).

ATP is bound at residue 10–20 (FSGGQDSTTCL). 4 residues coordinate Zn(2+): Cys-188, Cys-196, Cys-199, and Cys-202.

Belongs to the QueC family. Zn(2+) serves as cofactor.

It catalyses the reaction 7-carboxy-7-deazaguanine + NH4(+) + ATP = 7-cyano-7-deazaguanine + ADP + phosphate + H2O + H(+). It participates in purine metabolism; 7-cyano-7-deazaguanine biosynthesis. Its function is as follows. Catalyzes the ATP-dependent conversion of 7-carboxy-7-deazaguanine (CDG) to 7-cyano-7-deazaguanine (preQ(0)). This Neisseria gonorrhoeae (strain NCCP11945) protein is 7-cyano-7-deazaguanine synthase.